The following is a 780-amino-acid chain: MMEDNKQLALRIDGAVQSASQEVTNLRAELTATNRRLAELSGGGGGPGSGPGAATSASAAAVTVADSAVATMENHQHGAQVLLREEVVQLQEEVHLLRQMKEMLAKDLEESQGGKCSEVLSATELRVQLVQKEQELARAREALQAMKADRKRLKGEKTDLVSQMQQLYATLESREEQLRDFIRNYEQHRKESEDAVKALAKEKDLLEREKWELRRQAKEATDHAAALRSQLDLKDNRMKELEAELAMAKQSLATLTKDVPKRHSLAMPGETVLNGNQEWVVQADLPLTAAIRQSQQTLYHSHPPHPADRQAVRVSPCHSRQPSVISDASAAEGDRSSTPSDINSPRHRTHSLCNGDSPGPVQKSLHNPIVQSLEDLEDQKRKKKKEKMGFGSISRVFARGKQRKSLDPGLFDDSDSQCSPTRHSLSLSEGEEQMDRLQHVELVRTTPMSHWKAGTVQAWLEVVMAMPMYVKACAENVKSGKVLLSLSDEDLELGLGVCSSLHRRKLRLAIEDYRDAEAGRSLSKAADLDHHWVAKAWLNDIGLSQYSQAFQNHLVDGRMLNSLMKRDLEKHLNVSKKFHQVSILLGIELLYQVNFSREALQERRARCETQNTDPVVWTNQRVLKWVRDIDLKEYADNLTNSGVHGAVLVLEPTFNAEAMATALGIPSGKHILRRHLAEEMSTVFHPANSTGIRESERFGTPPGRASSITRAGKEDGSSNSKYRTGRLPLGKIGRGFSSKEPDYYDDYGSLENEDCGDDDLQGRPEQCRLEEYSSLEVTNV.

The stretch at 79–261 (AQVLLREEVV…LATLTKDVPK (183 aa)) forms a coiled coil. The tract at residues 295–430 (QQTLYHSHPP…TRHSLSLSEG (136 aa)) is disordered. Residues Ser357, Ser372, and Ser392 each carry the phosphoserine modification. The span at 416 to 427 (SQCSPTRHSLSL) shows a compositional bias: polar residues. SAM domains follow at residues 451-516 (WKAG…YRDA), 529-593 (DHHW…LYQV), and 617-684 (WTNQ…STVF). The tract at residues 692-780 (IRESERFGTP…EYSSLEVTNV (89 aa)) is disordered. A compositionally biased stretch (basic and acidic residues) spans 760–771 (LQGRPEQCRLEE).

Belongs to the kazrin family.

It localises to the cell junction. Its subcellular location is the nucleus. It is found in the cytoplasm. The protein resides in the cytoskeleton. Functionally, component of the cornified envelope of keratinocytes. May be involved in the interplay between adherens junctions and desmosomes. The function in the nucleus is not known. The sequence is that of Kazrin (Kazn) from Rattus norvegicus (Rat).